Reading from the N-terminus, the 195-residue chain is Cysteine/O-acetylserine efflux protein (195 aa).

The Periplasmic portion of the chain corresponds to 1 to 7; sequence MTPTLLS. A helical membrane pass occupies residues 8-28; the sequence is AFWTYTLITAMTPGPNNILAL. The Cytoplasmic segment spans residues 29-46; that stretch reads SSATSHGFRQSTRVLAGM. Residues 47–67 traverse the membrane as a helical segment; the sequence is SLGFLIVMLLCAGISFSLAVI. Topologically, residues 68–69 are periplasmic; the sequence is DP. The helical transmembrane segment at 70–90 threads the bilayer; that stretch reads AAVHLLSWAGAAYIVWLAWKI. Residues 91-104 lie on the Cytoplasmic side of the membrane; that stretch reads ATSPTKEDGLQAKP. A helical membrane pass occupies residues 105 to 125; that stretch reads ISFWASFALQFVNVKIILYGV. The Periplasmic portion of the chain corresponds to 126–141; sequence TALSTFVLPQTQALSW. The chain crosses the membrane as a helical span at residues 142 to 162; the sequence is VVGVSVLLAMIGTFGNVCWAL. The Cytoplasmic segment spans residues 163 to 176; sequence AGHLFQRLFRQYGR. The helical transmembrane segment at 177 to 194 threads the bilayer; it reads QLNIVLALLLVYCAVRIF. Tyr-195 is a topological domain (periplasmic).

It belongs to the Rht family.

The protein resides in the cell inner membrane. The catalysed reaction is O-acetyl-L-serine(in) = O-acetyl-L-serine(out). The enzyme catalyses L-cysteine(in) = L-cysteine(out). In terms of biological role, exporter of O-acetylserine (OAS) and cysteine. The chain is Cysteine/O-acetylserine efflux protein (eamB) from Escherichia coli O9:H4 (strain HS).